The following is a 305-amino-acid chain: Mitogen-activated protein kinase kinase 10 (305 aa).

Ser34 carries the post-translational modification Phosphoserine. One can recognise a Protein kinase domain in the interval 48–302 (LEKLSVLGQG…VEELLRHSFV (255 aa)). ATP-binding positions include 54 to 62 (LGQGSGGTV) and Lys77. The active-site Proton acceptor is the Asp165. The residue at position 200 (Thr200) is a Phosphothreonine.

The protein belongs to the protein kinase superfamily. STE Ser/Thr protein kinase family. MAP kinase kinase subfamily. In terms of assembly, interacts with P.syringae type III effector HopF2.

It catalyses the reaction L-seryl-[protein] + ATP = O-phospho-L-seryl-[protein] + ADP + H(+). The catalysed reaction is L-threonyl-[protein] + ATP = O-phospho-L-threonyl-[protein] + ADP + H(+). The enzyme catalyses L-tyrosyl-[protein] + ATP = O-phospho-L-tyrosyl-[protein] + ADP + H(+). This chain is Mitogen-activated protein kinase kinase 10 (MKK10), found in Arabidopsis thaliana (Mouse-ear cress).